Reading from the N-terminus, the 274-residue chain is Urease accessory protein UreD (274 aa).

It belongs to the UreD family. In terms of assembly, ureD, UreF and UreG form a complex that acts as a GTP-hydrolysis-dependent molecular chaperone, activating the urease apoprotein by helping to assemble the nickel containing metallocenter of UreC. The UreE protein probably delivers the nickel.

Its subcellular location is the cytoplasm. Its function is as follows. Required for maturation of urease via the functional incorporation of the urease nickel metallocenter. This Enterobacter sp. (strain 638) protein is Urease accessory protein UreD.